Here is a 276-residue protein sequence, read N- to C-terminus: 2-dehydro-3-deoxyphosphooctonate aldolase (276 aa).

This sequence belongs to the KdsA family.

It localises to the cytoplasm. It catalyses the reaction D-arabinose 5-phosphate + phosphoenolpyruvate + H2O = 3-deoxy-alpha-D-manno-2-octulosonate-8-phosphate + phosphate. It participates in carbohydrate biosynthesis; 3-deoxy-D-manno-octulosonate biosynthesis; 3-deoxy-D-manno-octulosonate from D-ribulose 5-phosphate: step 2/3. The protein operates within bacterial outer membrane biogenesis; lipopolysaccharide biosynthesis. The protein is 2-dehydro-3-deoxyphosphooctonate aldolase of Helicobacter pylori (strain P12).